The primary structure comprises 510 residues: Inositol-3-phosphate synthase (510 aa).

Positions 70, 71, 72, 73, 143, 180, 190, 193, 230, 231, 232, 233, 281, 282, 306, 309, 340, 341, 342, 355, 393, 394, 422, and 423 each coordinate NAD(+).

It belongs to the myo-inositol 1-phosphate synthase family. The cofactor is NAD(+).

Its subcellular location is the cytoplasm. It localises to the cytosol. The protein resides in the nucleus. It catalyses the reaction D-glucose 6-phosphate = 1D-myo-inositol 3-phosphate. The protein operates within polyol metabolism; myo-inositol biosynthesis; myo-inositol from D-glucose 6-phosphate: step 1/2. Functionally, key enzyme in myo-inositol biosynthesis pathway that catalyzes the conversion of glucose 6-phosphate to 1-myo-inositol 1-phosphate in a NAD-dependent manner. The sequence is that of Inositol-3-phosphate synthase from Nicotiana tabacum (Common tobacco).